A 113-amino-acid chain; its full sequence is Ig kappa chain V-II region 7S34.1 (113 aa).

The tract at residues 1–23 (DIVMTQTAPSALVTPGESVSISC) is framework-1. A disulfide bond links cysteine 23 and cysteine 93. The interval 24–39 (RSSKSLLHSNGNTYLY) is complementarity-determining-1. The tract at residues 40–54 (WFLQRPGQCPQLLIY) is framework-2. The interval 55–61 (RMSNLAS) is complementarity-determining-2. Positions 62 to 93 (GVPDRFSGSGSGTAFTLRISRVEAEDVGVYYC) are framework-3. The complementarity-determining-3 stretch occupies residues 94-102 (MQQREYPYT). Residues 103–112 (FGGGTKLEIK) are framework-4.

In Mus musculus (Mouse), this protein is Ig kappa chain V-II region 7S34.1.